The chain runs to 105 residues: Large ribosomal subunit protein uL24 (105 aa).

It belongs to the universal ribosomal protein uL24 family. In terms of assembly, part of the 50S ribosomal subunit.

In terms of biological role, one of two assembly initiator proteins, it binds directly to the 5'-end of the 23S rRNA, where it nucleates assembly of the 50S subunit. Its function is as follows. One of the proteins that surrounds the polypeptide exit tunnel on the outside of the subunit. This is Large ribosomal subunit protein uL24 from Beijerinckia indica subsp. indica (strain ATCC 9039 / DSM 1715 / NCIMB 8712).